A 705-amino-acid polypeptide reads, in one-letter code: Probable cyclic nucleotide-gated ion channel 16 (705 aa).

Residues 1–57 (MSNLHLYTSARFRNFPTTFSLRHHHNDPNNQRRRSIFSKLRDKTLDPGGDLITRWNH) are Cytoplasmic-facing. The chain crosses the membrane as a helical span at residues 58–78 (IFLITCLLALFLDPLYFYLPI). Residues 79–91 (VQAGTACMSIDVR) are Extracellular-facing. The helical transmembrane segment at 92-112 (FGIFVTCFRNLADLSFLIHIL) threads the bilayer. Over 113-147 (LKFKTAFVSKSSRVFGRGELVMDRREIAIRYLKSE) the chain is Cytoplasmic. A helical membrane pass occupies residues 148–168 (FVIDLAATLPLPQIMIWFVIP). Over 169–180 (NAGEFRYAAHQN) the chain is Extracellular. A helical membrane pass occupies residues 181 to 201 (HTLSLIVLIQYVPRFLVMLPL). The Cytoplasmic segment spans residues 202–222 (NRRIIKATGVAAKTAWSGAAY). Residues 223-243 (NLILYLLVSHVLGSVWYVLSI) traverse the membrane as a helical segment. Over 244–353 (QRQHECWRRE…LAASTLSSET (110 aa)) the chain is Extracellular. Residues 354–374 (IFSCFICVAGLVFFSHLIGNV) traverse the membrane as a helical segment. The Cytoplasmic portion of the chain corresponds to 375-705 (QNYLQSTTAR…MFKPEDPGFF (331 aa)). A nucleoside 3',5'-cyclic phosphate-binding positions include 457-580 (FFAQ…HSKK) and E528. The calmodulin-binding stretch occupies residues 573-588 (FRRLHSKKLQHAFRYY). An IQ domain is found at 593–622 (RAWGTCFIQAAWRRYMKRKLAMELARQEEE). 2 disordered regions span residues 636-655 (EEDM…SNNQ) and 672-705 (RGVL…PGFF). Residues 642–655 (SNNNNGDENSSNNQ) are compositionally biased toward low complexity.

This sequence belongs to the cyclic nucleotide-gated cation channel (TC 1.A.1.5) family. As to quaternary structure, homotetramer or heterotetramer.

The protein localises to the cell membrane. Putative cyclic nucleotide-gated ion channel. The polypeptide is Probable cyclic nucleotide-gated ion channel 16 (CNGC16) (Arabidopsis thaliana (Mouse-ear cress)).